Here is a 160-residue protein sequence, read N- to C-terminus: 6,7-dimethyl-8-ribityllumazine synthase (160 aa).

Residues W26, 58–60, and 80–82 contribute to the 5-amino-6-(D-ribitylamino)uracil site; these read AIE and VVI. 85-86 lines the (2S)-2-hydroxy-3-oxobutyl phosphate pocket; sequence ET. Residue H88 is the Proton donor of the active site. A 5-amino-6-(D-ribitylamino)uracil-binding site is contributed by N113. R127 contacts (2S)-2-hydroxy-3-oxobutyl phosphate.

Belongs to the DMRL synthase family. In terms of assembly, homopentamer.

The enzyme catalyses (2S)-2-hydroxy-3-oxobutyl phosphate + 5-amino-6-(D-ribitylamino)uracil = 6,7-dimethyl-8-(1-D-ribityl)lumazine + phosphate + 2 H2O + H(+). The protein operates within cofactor biosynthesis; riboflavin biosynthesis; riboflavin from 2-hydroxy-3-oxobutyl phosphate and 5-amino-6-(D-ribitylamino)uracil: step 1/2. Its function is as follows. Catalyzes the formation of 6,7-dimethyl-8-ribityllumazine by condensation of 5-amino-6-(D-ribitylamino)uracil with 3,4-dihydroxy-2-butanone 4-phosphate. This is the penultimate step in the biosynthesis of riboflavin. In Mycobacteroides abscessus (strain ATCC 19977 / DSM 44196 / CCUG 20993 / CIP 104536 / JCM 13569 / NCTC 13031 / TMC 1543 / L948) (Mycobacterium abscessus), this protein is 6,7-dimethyl-8-ribityllumazine synthase.